Reading from the N-terminus, the 255-residue chain is 5'-nucleotidase SurE (255 aa).

Residues D8, D9, S39, and N91 each coordinate a divalent metal cation.

The protein belongs to the SurE nucleotidase family. A divalent metal cation is required as a cofactor.

The protein localises to the cytoplasm. The enzyme catalyses a ribonucleoside 5'-phosphate + H2O = a ribonucleoside + phosphate. In terms of biological role, nucleotidase that shows phosphatase activity on nucleoside 5'-monophosphates. This chain is 5'-nucleotidase SurE, found in Acinetobacter baumannii (strain SDF).